We begin with the raw amino-acid sequence, 752 residues long: Protein ORF24 (752 aa).

This sequence belongs to the herpesviridae UL87 family. As to quaternary structure, interacts with ORF34.

In terms of biological role, plays a role in the expression of late viral mRNAs together with ORF34. This is Protein ORF24 (ORF24) from Homo sapiens (Human).